Here is a 116-residue protein sequence, read N- to C-terminus: Large ribosomal subunit protein bL17 (116 aa).

This sequence belongs to the bacterial ribosomal protein bL17 family. In terms of assembly, part of the 50S ribosomal subunit. Contacts protein L32.

The protein is Large ribosomal subunit protein bL17 of Prochlorococcus marinus (strain NATL2A).